Reading from the N-terminus, the 329-residue chain is Nicotianamine synthase 8 (329 aa).

It belongs to the nicotianamine synthase (NAS)-like family. Homotrimer.

It carries out the reaction 3 S-adenosyl-L-methionine = nicotianamine + 3 S-methyl-5'-thioadenosine + 3 H(+). In terms of biological role, synthesizes nicotianamine, a polyamine that is the first intermediate in the synthesis of the phytosiderophores of the mugineic acid type found in gramineae which serve as a sensor for the physiological iron status within the plant, and/or might be involved in the transport of iron. The protein is Nicotianamine synthase 8 (NAS8) of Hordeum vulgare (Barley).